Consider the following 232-residue polypeptide: Large ribosomal subunit protein uL1 (232 aa).

The protein belongs to the universal ribosomal protein uL1 family. As to quaternary structure, part of the 50S ribosomal subunit.

Binds directly to 23S rRNA. The L1 stalk is quite mobile in the ribosome, and is involved in E site tRNA release. In terms of biological role, protein L1 is also a translational repressor protein, it controls the translation of the L11 operon by binding to its mRNA. This Xanthomonas oryzae pv. oryzae (strain MAFF 311018) protein is Large ribosomal subunit protein uL1.